Reading from the N-terminus, the 223-residue chain is von Willebrand factor C domain-containing protein 2-like (223 aa).

Positions 1–21 (MGPFLPAICVVLLALNAAVSP) are cleaved as a signal peptide. VWFC domains follow at residues 51–110 (KGCV…PECK) and 114–172 (NFCE…PICK).

It localises to the secreted. Its subcellular location is the synapse. Its function is as follows. May play a role in bone differentiation and matrix mineralization. May play a role in neural development. The protein is von Willebrand factor C domain-containing protein 2-like (vwc2l) of Danio rerio (Zebrafish).